Consider the following 160-residue polypeptide: MHTKAVYPGTFDPITNGHADLIERAANMFAHVIVGIAANPSKKPLFSLQERVDLIKEVTEHLPNVEVIGFEGLLADFADSQGATVLIRGLRAVSDFEYEFQLANMNRRLNPNLESIFLTPAEENSFISSTLVKEVALHRGKVDQFCHPAVQAALKEKLQQ.

Residue T10 coordinates substrate. ATP is bound by residues T10–F11 and H18. Residues K42, L74, and R88 each coordinate substrate. ATP is bound by residues G89–R91, E99, and N124–T130.

Belongs to the bacterial CoaD family. Homohexamer. Mg(2+) serves as cofactor.

The protein localises to the cytoplasm. The catalysed reaction is (R)-4'-phosphopantetheine + ATP + H(+) = 3'-dephospho-CoA + diphosphate. Its pathway is cofactor biosynthesis; coenzyme A biosynthesis; CoA from (R)-pantothenate: step 4/5. Reversibly transfers an adenylyl group from ATP to 4'-phosphopantetheine, yielding dephospho-CoA (dPCoA) and pyrophosphate. The polypeptide is Phosphopantetheine adenylyltransferase (Pseudoalteromonas atlantica (strain T6c / ATCC BAA-1087)).